Here is a 113-residue protein sequence, read N- to C-terminus: Parvalbumin beta (113 aa).

At alanine 1 the chain carries N-acetylalanine. Cysteine 18 is a glycosylation site (S-linked (Glc) cysteine). EF-hand domains lie at 38-73 (FSAD…FAAD) and 77-112 (LTDA…WGAK). Positions 51, 53, 55, 57, 59, 62, 90, 92, 94, 96, and 101 each coordinate Ca(2+).

It belongs to the parvalbumin family. As to expression, muscle (at protein level).

In muscle, parvalbumin is thought to be involved in relaxation after contraction. It binds two calcium ions. This is Parvalbumin beta from Gadus morhua subsp. callarias (Baltic cod).